Reading from the N-terminus, the 313-residue chain is MKWSEISIHTTAEATEAVSSLLYELGANGVVIEDPEVLYREWDTPFGEIYQLSPDDFPAEGVFVKAYLPVDSSELLDVVEELKEQLAQLIEYGLDIGKASIAVNDVHEDEWAHAWKKYYKPVHVSDRMTIKPVWEEYVPKHPDEIIIEMDPGMAFGTGTHPTTILCLRALEKYMAKGDQVYDVGTGTAILSIAAIKLGAKDVLAMDLDEVAVRSAQANTELNGVHEHINVRQNNLLDGIEEQVEVVVANILAEVIVRFTDDVFRVLKPGGTFISSGIIAAREADVKAALVASGLEIVETIFIDDWVAIVAKKR.

T163, G184, D206, and N249 together coordinate S-adenosyl-L-methionine.

It belongs to the methyltransferase superfamily. PrmA family.

It is found in the cytoplasm. The catalysed reaction is L-lysyl-[protein] + 3 S-adenosyl-L-methionine = N(6),N(6),N(6)-trimethyl-L-lysyl-[protein] + 3 S-adenosyl-L-homocysteine + 3 H(+). Its function is as follows. Methylates ribosomal protein L11. This chain is Ribosomal protein L11 methyltransferase, found in Brevibacillus brevis (strain 47 / JCM 6285 / NBRC 100599).